Consider the following 298-residue polypeptide: Spermidine synthase (298 aa).

One can recognise a PABS domain in the interval 13–248 (DGWFREINNM…GSIGFVVASK (236 aa)). Position 44 (Gln44) interacts with S-adenosyl 3-(methylsulfanyl)propylamine. A putrescine-binding site is contributed by Tyr74. S-adenosyl 3-(methylsulfanyl)propylamine is bound by residues Gln75, Asp99, Asp119, 150–151 (DG), and Asp168. Residue Asp168 is the Proton acceptor of the active site. Putrescine contacts are provided by residues 168–171 (DSSD) and Tyr236.

This sequence belongs to the spermidine/spermine synthase family.

It catalyses the reaction S-adenosyl 3-(methylsulfanyl)propylamine + putrescine = S-methyl-5'-thioadenosine + spermidine + H(+). The protein operates within amine and polyamine biosynthesis; spermidine biosynthesis; spermidine from putrescine: step 1/1. In Schizosaccharomyces pombe (strain 972 / ATCC 24843) (Fission yeast), this protein is Spermidine synthase.